A 336-amino-acid chain; its full sequence is Immune-associated nucleotide-binding protein 13 (336 aa).

Residues 15–221 (KPERTLVLLG…YMADLSHELR (207 aa)) form the AIG1-type G domain. Residues 24-31 (GRTGNGKS) are G1. Residues 24-32 (GRTGNGKSA) and S45 each bind GTP. The tract at residues 51 to 55 (FITKE) is G2. Positions 73–76 (DTPG) are G3. The G4 stretch occupies residues 143–146 (TNED). The interval 179–181 (DNS) is G5. Position 180 (N180) interacts with GTP. A coiled-coil region spans residues 265–328 (KEKISNQLKE…EKETASLRTE (64 aa)).

The protein belongs to the TRAFAC class TrmE-Era-EngA-EngB-Septin-like GTPase superfamily. AIG1/Toc34/Toc159-like paraseptin GTPase family. IAN subfamily. In terms of tissue distribution, expressed in pollen grains.

The sequence is that of Immune-associated nucleotide-binding protein 13 from Arabidopsis thaliana (Mouse-ear cress).